Consider the following 301-residue polypeptide: Rhodopsin (301 aa).

Topologically, residues 1–18 (LHMIHLHWYQYPPMNPMM) are extracellular. The chain crosses the membrane as a helical span at residues 19-43 (YPLLLVFMLITGILCLAGNFVTIWV). At 44–55 (FMNTKSLRTPAN) the chain is on the cytoplasmic side. Residues 56 to 78 (LLVVNLAMSDFLMMFTMFPPMMI) traverse the membrane as a helical segment. Residues 79 to 92 (TCYYHTWTLGATFC) lie on the Extracellular side of the membrane. A disulfide bond links Cys92 and Cys169. Residues 93 to 115 (EVYAFLGNLCGCASIWTMVFITF) form a helical membrane-spanning segment. The 'Ionic lock' involved in activated form stabilization motif lies at 116–118 (DRY). The Cytoplasmic segment spans residues 116–134 (DRYNVIVKGVAGEPLSTKK). Residues 135–155 (ASLWILTVWVLSFTWCVAPFF) traverse the membrane as a helical segment. The Extracellular segment spans residues 156–182 (GWNRYVPEGNLTGCGTDYLSEDILSRS). N-linked (GlcNAc...) asparagine glycosylation occurs at Asn165. The chain crosses the membrane as a helical span at residues 183 to 204 (YLYIYSTWVYFLPLAITIYCYV). Topologically, residues 205-245 (FIIKAVAAHEKGMRDQAKKMGIKSLRNEEAQKTSAECRLAK) are cytoplasmic. The chain crosses the membrane as a helical span at residues 246–267 (IAMTTVALWFIAWTPYLLINWV). Topologically, residues 268–278 (GMFARSYLSPV) are extracellular. Residues 279–300 (YTIWGYVFAKANAVYNPIVYAI) form a helical membrane-spanning segment. Lys288 bears the N6-(retinylidene)lysine mark.

The protein belongs to the G-protein coupled receptor 1 family. Opsin subfamily. In terms of assembly, homodimer. Interacts with GNAQ. In terms of processing, contains one covalently linked retinal chromophore.

It localises to the cell projection. The protein resides in the rhabdomere membrane. Functionally, photoreceptor required for image-forming vision at low light intensity. Can use both retinal and 3-dehydroretinal as visual pigment. Light-induced isomerization of 11-cis to all-trans retinal triggers a conformational change that activates signaling via G-proteins. Signaling via GNAQ probably mediates the activation of phospholipase C. The sequence is that of Rhodopsin (RHO) from Lacunicambarus ludovicianus (Painted devil crayfish).